The chain runs to 70 residues: Probable rubredoxin HupI (70 aa).

Positions 15–66 (DDRMECGICWHVYDPAEGDPVWQIPPGTPFSNLTEDWRCPNCDALQSKFMRL) constitute a Rubredoxin-like domain. 4 residues coordinate Fe cation: Cys-20, Cys-23, Cys-53, and Cys-56.

It belongs to the rubredoxin family. Requires Fe(3+) as cofactor.

In terms of biological role, could be an electron transport intermediate in hydrogen oxidation. The chain is Probable rubredoxin HupI (hupI) from Rhizobium leguminosarum bv. viciae.